The following is a 358-amino-acid chain: Phospho-N-acetylmuramoyl-pentapeptide-transferase (358 aa).

10 helical membrane passes run 28–48 (WALATALLVSIVVGPRFIAWL), 72–92 (TMGGLLIGFAVTFSVLLWADL), 96–116 (YIWLTLLVFTGFGFIGFLDDY), 133–153 (FLWQVGVAVAAMYLLVQLPAY), 164–184 (GLTPDLGWLYIPFAVAVMVGS), 196–216 (GLAIGPTIVAGIVFSIFIYVA), 233–253 (VGEVAVFCGALVGAGLGFLWF), 260–280 (VFMGDVGSLSLGGTLGFLAVL), 285–305 (LLLLVVGGLFVVETLSVILQV), and 335–355 (KIIIRFWITSALLGLIALSVL).

This sequence belongs to the glycosyltransferase 4 family. MraY subfamily. Mg(2+) serves as cofactor.

It is found in the cell inner membrane. It carries out the reaction UDP-N-acetyl-alpha-D-muramoyl-L-alanyl-gamma-D-glutamyl-meso-2,6-diaminopimeloyl-D-alanyl-D-alanine + di-trans,octa-cis-undecaprenyl phosphate = di-trans,octa-cis-undecaprenyl diphospho-N-acetyl-alpha-D-muramoyl-L-alanyl-D-glutamyl-meso-2,6-diaminopimeloyl-D-alanyl-D-alanine + UMP. The protein operates within cell wall biogenesis; peptidoglycan biosynthesis. Its function is as follows. Catalyzes the initial step of the lipid cycle reactions in the biosynthesis of the cell wall peptidoglycan: transfers peptidoglycan precursor phospho-MurNAc-pentapeptide from UDP-MurNAc-pentapeptide onto the lipid carrier undecaprenyl phosphate, yielding undecaprenyl-pyrophosphoryl-MurNAc-pentapeptide, known as lipid I. This chain is Phospho-N-acetylmuramoyl-pentapeptide-transferase, found in Nitratidesulfovibrio vulgaris (strain ATCC 29579 / DSM 644 / CCUG 34227 / NCIMB 8303 / VKM B-1760 / Hildenborough) (Desulfovibrio vulgaris).